The chain runs to 412 residues: Cytochrome p450 CYP199A2 (412 aa).

Residues 94–97 (RPPS) and Ser247 contribute to the substrate site. Cys361 is a binding site for heme.

The protein belongs to the cytochrome P450 family. In terms of assembly, interacts with the ferredoxin-like iron-sulfur protein ThcC. Heme serves as cofactor.

The protein localises to the cytoplasm. It catalyses the reaction 4-methoxybenzoate + AH2 + O2 = 4-hydroxybenzoate + formaldehyde + A + H2O. Functionally, the oxidative demethylation of 4-methoxybenzoate requires the participation of the monooxygenase CYP199A2, the ferredoxin-like protein ThcC/RPA1872 and a ferredoxin reductase to mediate the transfer of electrons from NADH to CYP199A2. It is also active with 4-ethylbenzoate. The protein is Cytochrome p450 CYP199A2 of Rhodopseudomonas palustris (strain ATCC BAA-98 / CGA009).